The chain runs to 660 residues: Methionine--tRNA ligase (660 aa).

Positions 11–21 (PYANGPCHLGH) match the 'HIGH' region motif. The Zn(2+) site is built by Cys143, Cys146, Cys155, and Cys158. The 'KMSKS' region signature appears at 325-329 (KMSTS). Position 328 (Thr328) interacts with ATP. The tRNA-binding domain maps to 563–660 (DFDKVVIKIG…DECEVGERIQ (98 aa)).

It belongs to the class-I aminoacyl-tRNA synthetase family. MetG type 1 subfamily. In terms of assembly, homodimer. Zn(2+) serves as cofactor.

It is found in the cytoplasm. It catalyses the reaction tRNA(Met) + L-methionine + ATP = L-methionyl-tRNA(Met) + AMP + diphosphate. In terms of biological role, is required not only for elongation of protein synthesis but also for the initiation of all mRNA translation through initiator tRNA(fMet) aminoacylation. The chain is Methionine--tRNA ligase from Methanobrevibacter smithii (strain ATCC 35061 / DSM 861 / OCM 144 / PS).